The sequence spans 216 residues: uncharacterized protein (216 aa).

The N-terminal stretch at 1 to 17 (MLKKIIILFLGMFLLSA) is a signal peptide. C18 carries the N-palmitoyl cysteine lipid modification. C18 carries S-diacylglycerol cysteine lipidation. Positions 133 to 162 (SDKEKKIQEELNQIKAMLRETKRDISKYTC) form a coiled coil.

Its subcellular location is the cell membrane. This is an uncharacterized protein from Rickettsia conorii (strain ATCC VR-613 / Malish 7).